Here is a 613-residue protein sequence, read N- to C-terminus: Cysteine--tRNA ligase (613 aa).

The segment at M1–N130 is disordered. Tandem repeats lie at residues P36–V49, P50–V63, P64–V77, P78–V91, P92–V105, and P106–V119. The interval P36–V119 is 6 X 14 AA tandem repeats of P-[TA]-R-G-D-K-K-R-A-[RP]-R-[PL]-G-V. Residues V148–R613 are cysteinyl-tRNA synthetase. C176 provides a ligand contact to Zn(2+). The 'HIGH' region signature appears at A178 to H188. Zn(2+) is bound by residues C355, H380, and E384. Positions K411–S415 match the 'KMSKS' region motif. K414 contributes to the ATP binding site.

Belongs to the class-I aminoacyl-tRNA synthetase family. In terms of assembly, monomer. Zn(2+) is required as a cofactor.

The protein localises to the cytoplasm. It catalyses the reaction tRNA(Cys) + L-cysteine + ATP = L-cysteinyl-tRNA(Cys) + AMP + diphosphate. The chain is Cysteine--tRNA ligase from Streptomyces coelicolor (strain ATCC BAA-471 / A3(2) / M145).